We begin with the raw amino-acid sequence, 132 residues long: Small ribosomal subunit protein uS8 (132 aa).

It belongs to the universal ribosomal protein uS8 family. Part of the 30S ribosomal subunit. Contacts proteins S5 and S12.

Its function is as follows. One of the primary rRNA binding proteins, it binds directly to 16S rRNA central domain where it helps coordinate assembly of the platform of the 30S subunit. The chain is Small ribosomal subunit protein uS8 from Rickettsia akari (strain Hartford).